The sequence spans 311 residues: 4-hydroxy-tetrahydrodipicolinate synthase (311 aa).

Thr-51 contacts pyruvate. Residue Tyr-140 is the Proton donor/acceptor of the active site. Lys-168 functions as the Schiff-base intermediate with substrate in the catalytic mechanism. Ile-209 provides a ligand contact to pyruvate.

The protein belongs to the DapA family. Homotetramer; dimer of dimers.

It localises to the cytoplasm. It catalyses the reaction L-aspartate 4-semialdehyde + pyruvate = (2S,4S)-4-hydroxy-2,3,4,5-tetrahydrodipicolinate + H2O + H(+). It functions in the pathway amino-acid biosynthesis; L-lysine biosynthesis via DAP pathway; (S)-tetrahydrodipicolinate from L-aspartate: step 3/4. Its function is as follows. Catalyzes the condensation of (S)-aspartate-beta-semialdehyde [(S)-ASA] and pyruvate to 4-hydroxy-tetrahydrodipicolinate (HTPA). This Streptococcus pneumoniae (strain CGSP14) protein is 4-hydroxy-tetrahydrodipicolinate synthase.